Reading from the N-terminus, the 244-residue chain is ATP synthase subunit a (244 aa).

A run of 5 helical transmembrane segments spans residues 17–37 (LTNILMITVASVIVLLIAILT), 75–95 (FLALGVTLLMYIFVSNMLGLP), 112–132 (DPAITLTLAVMVVALTHYYGV), 170–190 (LYGNIFAGEILLGLLAGLATS), and 221–241 (GAIQAFIFTMLTMVYMSHKIS).

The protein belongs to the ATPase A chain family. As to quaternary structure, F-type ATPases have 2 components, CF(1) - the catalytic core - and CF(0) - the membrane proton channel. CF(1) has five subunits: alpha(3), beta(3), gamma(1), delta(1), epsilon(1). CF(0) has three main subunits: a(1), b(2) and c(9-12). The alpha and beta chains form an alternating ring which encloses part of the gamma chain. CF(1) is attached to CF(0) by a central stalk formed by the gamma and epsilon chains, while a peripheral stalk is formed by the delta and b chains. The F(1)F(0) complex interacts with SpoIIIJ and YqjG; YqgA is found in the same complex.

The protein localises to the cell membrane. Its function is as follows. Key component of the proton channel; it plays a direct role in the translocation of protons across the membrane. The protein is ATP synthase subunit a of Bacillus subtilis (strain 168).